Reading from the N-terminus, the 303-residue chain is Pycsar effector protein XpPycTIR (303 aa).

An a nucleoside 3',5'-cyclic phosphate-binding site is contributed by 14–138 (LVATLTEHRL…RRIAATLARR (125 aa)). Residues 154 to 273 (RVFIMSSVEA…DLAGLTTIPY (120 aa)) are TIR-like.

It localises to the cytoplasm. The enzyme catalyses NAD(+) + H2O = ADP-D-ribose + nicotinamide + H(+). Functionally, pycsar (pyrimidine cyclase system for antiphage resistance) provides immunity against bacteriophage. The pyrimidine cyclase (PycC) synthesizes cyclic nucleotides in response to infection; these serve as specific second messenger signals. The signals activate the adjacent effector, leading to bacterial cell death and abortive phage infection. A clade B Pycsar system. In terms of biological role, the effector gene of a two-gene Pycsar system. Expression of this and adjacent uridylate cyclase XpPycC (AC P0DV28) confers resistance to bacteriophage T7. When cells expressing the Pycsar system are infected by phage T7 at low multiplicity of infection (0.2 MOI) the culture survivey, at 2.0 MOI bacteria enter growth arrest. The same cells enter growth arrest after exposure to 2.5 mM cUMP but not cCMP; the effector protein responds only to the cUMP usually produced by its cognate NTP cyclase. NAD(+) levels in infected cells are depleted between 5 and 10 minutes after infection with T7 at MOI of 2. Probably only responds to cUMP. This Xanthomonas perforans protein is Pycsar effector protein XpPycTIR.